The primary structure comprises 84 residues: Small ribosomal subunit protein uS17 (84 aa).

This sequence belongs to the universal ribosomal protein uS17 family. In terms of assembly, part of the 30S ribosomal subunit.

In terms of biological role, one of the primary rRNA binding proteins, it binds specifically to the 5'-end of 16S ribosomal RNA. This Alkaliphilus metalliredigens (strain QYMF) protein is Small ribosomal subunit protein uS17.